The primary structure comprises 381 residues: Trans-enoyl reductase iliB (381 aa).

50–53 (VDGK) serves as a coordination point for NADP(+). Substrate is bound at residue 145–152 (ATLATVGL). NADP(+) is bound by residues 213 to 216 (SPGS), tyrosine 231, and 278 to 279 (LD). 298–302 (TYTQF) contributes to the substrate binding site. Residue 367 to 368 (IS) coordinates NADP(+).

It belongs to the zinc-containing alcohol dehydrogenase family. Monomer.

It catalyses the reaction N-[(4E,6E,10S,12Z,14E)-6,10-dimethyl-3-oxohexadeca-4,6,12,14-tetraenoyl]-L-tyrosyl-[ACP] = (3E,5S)-3-[(2E,4E,8S,10E,12Z)-1-hydroxy-4,8-dimethyltetradeca-2,4,10,12-tetraen-1-ylidene]-5-[(4-hydroxyphenyl)methyl]pyrrolidine-2,4-dione + holo-[ACP] + H(+). The protein operates within mycotoxin biosynthesis. Its function is as follows. Trans-enoyl reductase; part of the gene cluster that mediates the biosynthesis of ilicicolin H, a 4-hydroxy-2-pyridonealkaloid that has potent and broad antifungal activities by inhibiting the mitochondrial respiration chain. IliB collaborates with the hybrid PKS-NRPS synthetase iliA to assemble the backbone of ilicicolin H. The PKS portion of iliA and trans-acting enoyl reductase iliB work together to construct an octaketide, and two methyl groups are introduced by the MT domain of iliA during the chain assembly. The nascent chain is then condensed with tyrosine, catalyzed by the iliA C domain, and the resulting PKS-NRPS hybrid is offloaded by the iliA RED domain to form an advanced tetramic acid intermediate. The biosynthesis of ilicicolin H starts with formation of the tetramic acid by the hybrid PKS-NRPS synthetase iliA with the partnering trans-enoyl reductase iliB since iliA lacks a designated enoylreductase (ER) domain. The cytochrome P450 monooxygenase iliC then catalyzes the ring expansion of the tetramate to the acyclic 2-pyridone. The pericyclase iliD further converts the acyclic 2-pyridone into 8-epi-ilicicolin H. 8-epi-ilicicolin H might then spontaneously convert to ilicicolin H since ilicicolin H is produced in the absence of the epimerase iliE, in contrast to what was observed for the Talaromyces variabilis ilicolin H biosynthetic pathway. In Neonectria sp. (strain DH2), this protein is Trans-enoyl reductase iliB.